A 314-amino-acid polypeptide reads, in one-letter code: DNA-directed RNA polymerase subunit alpha (314 aa).

Residues 1-228 (MIEIEKPKIE…EHLNIFVGLT (228 aa)) form an alpha N-terminal domain (alpha-NTD) region. The segment at 246–314 (EKVLEMTIEE…ELGLGLRKDD (69 aa)) is alpha C-terminal domain (alpha-CTD).

It belongs to the RNA polymerase alpha chain family. In terms of assembly, homodimer. The RNAP catalytic core consists of 2 alpha, 1 beta, 1 beta' and 1 omega subunit. When a sigma factor is associated with the core the holoenzyme is formed, which can initiate transcription.

The catalysed reaction is RNA(n) + a ribonucleoside 5'-triphosphate = RNA(n+1) + diphosphate. In terms of biological role, DNA-dependent RNA polymerase catalyzes the transcription of DNA into RNA using the four ribonucleoside triphosphates as substrates. The protein is DNA-directed RNA polymerase subunit alpha of Bacillus velezensis (strain DSM 23117 / BGSC 10A6 / LMG 26770 / FZB42) (Bacillus amyloliquefaciens subsp. plantarum).